We begin with the raw amino-acid sequence, 107 residues long: Disintegrin lebestatin (107 aa).

Positions Met1 to Ser20 are cleaved as a signal peptide. The propeptide occupies Lys21–Leu64. Cystine bridges form between Cys65–Cys74, Cys70–Cys93, Cys71–Cys98, and Cys83–Cys100. In terms of domain architecture, Disintegrin spans Cys65–Gly105. The Cell attachment site; atypical (KTS) signature appears at Lys85–Ser87. Residues Asn106 to Gly107 constitute a propeptide that is removed on maturation.

Monomer. In terms of tissue distribution, expressed by the venom gland.

It is found in the secreted. Specifically interacts with the alpha-1/beta-1 integrin (ITGA1/ITGB1). Exhibits highly inhibitory effects on cell adhesion and cell migration to collagens I and IV. Also shows in vivo anti-angiogenic activity. The chain is Disintegrin lebestatin from Macrovipera lebetinus (Levantine viper).